A 411-amino-acid polypeptide reads, in one-letter code: Actin-like protein 9 (411 aa).

Positions 1–15 are enriched in basic and acidic residues; sequence MDVNGPKRWEPHRSL. The segment at 1–23 is disordered; that stretch reads MDVNGPKRWEPHRSLDLNPRSTP.

It belongs to the actin family. As to quaternary structure, interacts with ACTL7A.

It localises to the cytoplasmic vesicle. Its subcellular location is the secretory vesicle. The protein localises to the acrosome. The protein resides in the cytoplasm. It is found in the cytoskeleton. It localises to the perinuclear theca. In terms of biological role, testis-specic protein that plays an important role in fusion of proacrosomal vesicles and perinuclear theca formation. The chain is Actin-like protein 9 (Actl9) from Rattus norvegicus (Rat).